The sequence spans 474 residues: Adenylyl cyclase-associated protein 1 (474 aa).

A2 is subject to N-acetylalanine. A Phosphotyrosine modification is found at Y31. S34 carries the post-translational modification Phosphoserine. K80 carries the N6-acetyllysine modification. Disordered stretches follow at residues 215–253 and 277–316; these read ELSG…SASR and MKTH…ATKK. Residues 217–227 are compositionally biased toward low complexity; that stretch reads SGLPSGPSVGS. A compositionally biased stretch (pro residues) spans 228 to 241; that stretch reads GPPPPPPGPPPPPI. The residue at position 286 (K286) is an N6-methyllysine. Phosphoserine occurs at positions 289, 294, and 300. A compositionally biased stretch (pro residues) spans 299–311; the sequence is FSAPKPQTSPSPK. T306 bears the Phosphothreonine mark. Phosphoserine is present on residues S307 and S309. The region spanning 312 to 452 is the C-CAP/cofactor C-like domain; it reads PATKKEPALL…EGGDFNEFPV (141 aa). Residue K347 forms a Glycyl lysine isopeptide (Lys-Gly) (interchain with G-Cter in SUMO1) linkage.

This sequence belongs to the CAP family. Homodimer. Binds actin monomers. Ubiquitous.

The protein resides in the cell membrane. Directly regulates filament dynamics and has been implicated in a number of complex developmental and morphological processes, including mRNA localization and the establishment of cell polarity. The protein is Adenylyl cyclase-associated protein 1 (Cap1) of Mus musculus (Mouse).